The primary structure comprises 256 residues: Acetyl-coenzyme A carboxylase carboxyl transferase subunit alpha (256 aa).

The CoA carboxyltransferase C-terminal domain occupies 1–236 (MSDVARILKE…KTAIVDELAE (236 aa)).

This sequence belongs to the AccA family. In terms of assembly, acetyl-CoA carboxylase is a heterohexamer composed of biotin carboxyl carrier protein (AccB), biotin carboxylase (AccC) and two subunits each of ACCase subunit alpha (AccA) and ACCase subunit beta (AccD).

It localises to the cytoplasm. The catalysed reaction is N(6)-carboxybiotinyl-L-lysyl-[protein] + acetyl-CoA = N(6)-biotinyl-L-lysyl-[protein] + malonyl-CoA. It functions in the pathway lipid metabolism; malonyl-CoA biosynthesis; malonyl-CoA from acetyl-CoA: step 1/1. In terms of biological role, component of the acetyl coenzyme A carboxylase (ACC) complex. First, biotin carboxylase catalyzes the carboxylation of biotin on its carrier protein (BCCP) and then the CO(2) group is transferred by the carboxyltransferase to acetyl-CoA to form malonyl-CoA. This Streptococcus thermophilus (strain ATCC BAA-491 / LMD-9) protein is Acetyl-coenzyme A carboxylase carboxyl transferase subunit alpha.